Reading from the N-terminus, the 218-residue chain is Claudin-3 (218 aa).

Over 1 to 8 the chain is Cytoplasmic; that stretch reads MSMGLEIA. Residues 9 to 29 form a helical membrane-spanning segment; it reads GTSLAVLGWLSTIVCCALPMW. The Extracellular segment spans residues 30–80; it reads RVTAFIGSSIITAQITWEGLWMNCVVQSTGQMQCKVYDSLLALPQDLQAAR. The helical transmembrane segment at 81-101 threads the bilayer; it reads ALIVVSILLAAFGLLVALVGA. Residues 102-115 lie on the Cytoplasmic side of the membrane; that stretch reads QCTNCVQDDTAKAK. Residues 116–136 form a helical membrane-spanning segment; sequence ITIVAGVLFLLAALLTLVPVS. Residues 137 to 159 are Extracellular-facing; that stretch reads WSANTIIRDFYNPLVPDAQKREM. Residues 160–180 form a helical membrane-spanning segment; the sequence is GAGLYVGWAAAALQLLGGALL. Residues 181 to 218 are Cytoplasmic-facing; the sequence is CCSCPPRDKKYAPTKIVYSAPRSAGPGTSTAYDRKDYV. Tyr198 carries the phosphotyrosine modification. Phosphoserine occurs at positions 199 and 209. Positions 217–218 are interactions with TJP1, TJP2 and TJP3; that stretch reads YV.

The protein belongs to the claudin family. Can form homo- and heteropolymers with other CLDN. Homopolymers interact with CLDN1 and CLDN2 homopolymers. Interacts in cis (within the same plasma membrane) with CLDN19. Directly interacts with TJP1/ZO-1, TJP2/ZO-2 and TJP3/ZO-3.

It is found in the cell junction. Its subcellular location is the tight junction. The protein resides in the cell membrane. Functionally, plays a major role in tight junction-specific obliteration of the intercellular space, through calcium-independent cell-adhesion activity. This is Claudin-3 (CLDN3) from Canis lupus familiaris (Dog).